Consider the following 296-residue polypeptide: Chondrolectin (296 aa).

The signal sequence occupies residues 1-20 (MRATLRILCALTFLVSCSRG). The Extracellular segment spans residues 21 to 238 (ARVVSGQTVC…RLIIAGPSSM (218 aa)). One can recognise a C-type lectin domain in the interval 38–187 (CYKIAYFKDV…CNMKHNFICK (150 aa)). Over residues 197 to 221 (VQSDRPGGHDVDLSTEDKEDRRTPP) the composition is skewed to basic and acidic residues. Residues 197–229 (VQSDRPGGHDVDLSTEDKEDRRTPPTDEDESPR) form a disordered region. A helical membrane pass occupies residues 239 to 266 (LLIYVIIPTIPLLLLILVASGTCCFQML). Topologically, residues 267-296 (SKSKPRTKTSVNQSTLWISKTPKIDSGMEV) are cytoplasmic.

As to expression, expressed in developing motor neurons.

It localises to the membrane. In terms of biological role, plays a role in the development of the nervous system such as in neurite outgrowth and elongation. Involved in motor axon growth and guidance. Required for correct interactions of motor axons with the horizontal myoseptum. The sequence is that of Chondrolectin (chodl) from Danio rerio (Zebrafish).